The sequence spans 463 residues: Phosphoglucosamine mutase (463 aa).

Serine 108 serves as the catalytic Phosphoserine intermediate. Positions 108, 247, 249, and 251 each coordinate Mg(2+). Residue serine 108 is modified to Phosphoserine.

The protein belongs to the phosphohexose mutase family. Requires Mg(2+) as cofactor. Activated by phosphorylation.

The catalysed reaction is alpha-D-glucosamine 1-phosphate = D-glucosamine 6-phosphate. Its function is as follows. Catalyzes the conversion of glucosamine-6-phosphate to glucosamine-1-phosphate. In Nitrosospira multiformis (strain ATCC 25196 / NCIMB 11849 / C 71), this protein is Phosphoglucosamine mutase.